A 408-amino-acid polypeptide reads, in one-letter code: MTATSDLIESLISYSWDDWQVTRQEARRVIAAIRNDNVPDATIAALDKSGSLIKLFQRVGPPELARSLIASIAGRTTMQRYQARNALIRSLINNPLGTQTDNWIYFPTITFFDICADLADAAGRLGFAAAGATGVASQAIQGPFSGVGATGVNPTDLPSIAFGDQLKLLNKDPATVTKYSNPLGDLGAYLSQLSPQDKLNQAQTLVGQPISTLFPDAYPGNPPSRAKVMSAAARKYDLTPQLIGAIILAEQRDQTRDEDAKDYQAAVSIKSANTSIGLGQVVVSTAIKYELFTDLLGQPVRRGLSRKAVATLLASDEFNIFATARYIRYVANLASQQDLRKLPKTRGAFPSIDLRAYAGNPRNWPRDNVRALASEYTSRPWDDNLSPGWPMFVDDAYATFLDPGMRFP.

The Ca(2+) site is built by Asn181, Asp253, Gln254, Glu258, Glu375, Ser378, Arg379, Asp382, and Asn384.

As to quaternary structure, forms a heterotetramer with Tsi3 consisting of two Tse3 dimers and two Tsi3 dimers. Formation of the complex inactivates Tse3 enzymatic activity. Requires Ca(2+) as cofactor.

The protein localises to the host membrane. The protein resides in the secreted. The enzyme catalyses Hydrolysis of (1-&gt;4)-beta-linkages between N-acetylmuramic acid and N-acetyl-D-glucosamine residues in a peptidoglycan and between N-acetyl-D-glucosamine residues in chitodextrins.. Its activity is regulated as follows. Enzymatic activity depends on membrane binding. Its function is as follows. Toxin secreted by the H1 type VI (H1-T6SS) secretion system into the periplasm of recipient cells. Degrades peptidoglycan via muramidase activity thereby helping itself to compete with other bacteria. To protect itself, the bacterium synthesizes immunity protein Tsi3 that specifically interacts with and inactivates cognate toxin. The protein is Peptidoglycan muramidase Tse3 of Pseudomonas aeruginosa (strain ATCC 15692 / DSM 22644 / CIP 104116 / JCM 14847 / LMG 12228 / 1C / PRS 101 / PAO1).